A 94-amino-acid polypeptide reads, in one-letter code: Co-chaperonin GroES (94 aa).

This sequence belongs to the GroES chaperonin family. As to quaternary structure, heptamer of 7 subunits arranged in a ring. Interacts with the chaperonin GroEL.

It localises to the cytoplasm. Together with the chaperonin GroEL, plays an essential role in assisting protein folding. The GroEL-GroES system forms a nano-cage that allows encapsulation of the non-native substrate proteins and provides a physical environment optimized to promote and accelerate protein folding. GroES binds to the apical surface of the GroEL ring, thereby capping the opening of the GroEL channel. This Ruminiclostridium cellulolyticum (strain ATCC 35319 / DSM 5812 / JCM 6584 / H10) (Clostridium cellulolyticum) protein is Co-chaperonin GroES.